An 88-amino-acid polypeptide reads, in one-letter code: Small ribosomal subunit protein bS16 (88 aa).

The protein belongs to the bacterial ribosomal protein bS16 family.

This chain is Small ribosomal subunit protein bS16, found in Buchnera aphidicola subsp. Cinara cedri (strain Cc).